The primary structure comprises 111 residues: uncharacterized protein (111 aa).

A helical membrane pass occupies residues 81–101 (YFFLLFYVSFPHIFLGLFFFI).

It is found in the membrane. This is an uncharacterized protein from Schizosaccharomyces pombe (strain 972 / ATCC 24843) (Fission yeast).